Here is a 334-residue protein sequence, read N- to C-terminus: Galactinol synthase 3 (334 aa).

K97 is an active-site residue. 3 residues coordinate Mn(2+): D113, D115, and H251.

This sequence belongs to the glycosyltransferase 8 family. Galactosyltransferase subfamily. A divalent metal cation serves as cofactor.

It is found in the cytoplasm. The enzyme catalyses myo-inositol + UDP-alpha-D-galactose = alpha-D-galactosyl-(1-&gt;3)-1D-myo-inositol + UDP + H(+). In terms of biological role, galactinol synthase involved in the biosynthesis of raffinose family oligosaccharides (RFOs) that function as osmoprotectants. May promote plant stress tolerance. The protein is Galactinol synthase 3 (GOLS3) of Arabidopsis thaliana (Mouse-ear cress).